The sequence spans 144 residues: D-aminoacyl-tRNA deacylase (144 aa).

The short motif at 136–137 (GP) is the Gly-cisPro motif, important for rejection of L-amino acids element.

It belongs to the DTD family. As to quaternary structure, homodimer.

Its subcellular location is the cytoplasm. The catalysed reaction is glycyl-tRNA(Ala) + H2O = tRNA(Ala) + glycine + H(+). It catalyses the reaction a D-aminoacyl-tRNA + H2O = a tRNA + a D-alpha-amino acid + H(+). An aminoacyl-tRNA editing enzyme that deacylates mischarged D-aminoacyl-tRNAs. Also deacylates mischarged glycyl-tRNA(Ala), protecting cells against glycine mischarging by AlaRS. Acts via tRNA-based rather than protein-based catalysis; rejects L-amino acids rather than detecting D-amino acids in the active site. By recycling D-aminoacyl-tRNA to D-amino acids and free tRNA molecules, this enzyme counteracts the toxicity associated with the formation of D-aminoacyl-tRNA entities in vivo and helps enforce protein L-homochirality. The chain is D-aminoacyl-tRNA deacylase from Histophilus somni (strain 129Pt) (Haemophilus somnus).